The sequence spans 229 residues: Glutamine amidotransferase-like class 1 domain-containing protein 1 (229 aa).

The first 34 residues, 1 to 34, serve as a signal peptide directing secretion; it reads MKKQGAPVSGGGTERLTKPSCLMVGSAVAEGVSA. N-linked (GlcNAc...) asparagine glycosylation is found at asparagine 154 and asparagine 212.

This sequence belongs to the peptidase C56 family. In terms of assembly, homotetramer. Component of the FERRY complex.

It is found in the secreted. The protein localises to the early endosome. Component of the FERRY complex (Five-subunit Endosomal Rab5 and RNA/ribosome intermediary). The FERRY complex directly interacts with mRNAs and RAB5A, and functions as a RAB5A effector involved in the localization and the distribution of specific mRNAs most likely by mediating their endosomal transport. The complex recruits mRNAs and ribosomes to early endosomes through direct mRNA-interaction. In Xenopus laevis (African clawed frog), this protein is Glutamine amidotransferase-like class 1 domain-containing protein 1.